Reading from the N-terminus, the 633-residue chain is MHRFLVKLSSSSSPFSNQLRSLKNQRLILPLLPSSKPFTSSSVSPPPSPLNASNRFGYPYSADLFRNLSPLNPNSRILGVNGITSSRCISSEAVRESIEYDVLIVGAGPAGLSAAIRLKQLSQEKNIDLSVCVVEKGAEVGGHIISGNVFEPLALDELLPHWRQEHAPIEIPASSDKFWFLTKDRAFSLPSPFDNKGNYVISLSQLVRWLGGKAEELGTEIYPGFSASEVLFDASDKVVGIATKDMGISKDGSKKENFQPGVDIKGRVTLFAEGCRGSLSERIIKKYKLREEVNAQHQTYALGIKEVWEIDESKHNPGEVIHTLGWPLDPKTYGGSFLYHMNDRQVALGLVVALNYHNPFLNPYEEFQKLKHHPAIKGILEGGTVLQYGARTLNEGGFQSIPYPVFPGGAIIGCSAGFLNVPKIKGTHTAMKSGMLAAEAAFGALHEGLNMNTYWDNLRDSWVWKELYAARNYRPAFEYGLLPGLAISAMEHYVLKGKVPFTLKHGKADHEATDLARKWTPIVYPKPDGVLSFDVPTSLYRSNTNHDHDQPSHLRLRDPKIPEKVNFPEYAAPESRYCPARVYEYIEDEEGKPKLQINAQNCLHCKACDIKDPKQNIEWTVPEGGGGPAYSLM.

The N-terminal 90 residues, 1–90 (MHRFLVKLSS…NGITSSRCIS (90 aa)), are a transit peptide targeting the mitochondrion. 102–116 (VLIVGAGPAGLSAAI) serves as a coordination point for FAD. An intramembrane segment occupies 140 to 161 (VGGHIISGNVFEPLALDELLPH). Residues Gly334 and Gly335 each contribute to the a ubiquinone site. The stretch at 401-421 (IPYPVFPGGAIIGCSAGFLNV) is an intramembrane region. [4Fe-4S] cluster is bound by residues Cys578, Cys602, Cys605, and Cys608. Residues 593 to 622 (PKLQINAQNCLHCKACDIKDPKQNIEWTVP) form the 4Fe-4S ferredoxin-type domain.

It belongs to the ETF-QO/FixC family. [4Fe-4S] cluster serves as cofactor. FAD is required as a cofactor.

Its subcellular location is the mitochondrion inner membrane. It catalyses the reaction a ubiquinone + reduced [electron-transfer flavoprotein] = a ubiquinol + oxidized [electron-transfer flavoprotein] + H(+). With respect to regulation, up-regulated by KIN10, by S1-bZIP specific dimers, and also by C/S1 bZIP heterodimers. In terms of biological role, accepts electrons from ETF and reduces ubiquinone. May act downstream of IVD and D2HGDH in the degradation of phytol or chlorophyll during dark-induced senescence and sugar starvation. The chain is Electron transfer flavoprotein-ubiquinone oxidoreductase, mitochondrial (ETFQO) from Arabidopsis thaliana (Mouse-ear cress).